A 169-amino-acid polypeptide reads, in one-letter code: Probable inosine/xanthosine triphosphatase (169 aa).

Substrate is bound at residue 7–12 (STNKAK). E35 is a Mg(2+) binding site.

This sequence belongs to the YjjX NTPase family. Homodimer. Mg(2+) serves as cofactor. The cofactor is Mn(2+).

It catalyses the reaction XTP + H2O = XDP + phosphate + H(+). The catalysed reaction is ITP + H2O = IDP + phosphate + H(+). Phosphatase that hydrolyzes non-canonical purine nucleotides such as XTP and ITP to their respective diphosphate derivatives. Probably excludes non-canonical purines from DNA/RNA precursor pool, thus preventing their incorporation into DNA/RNA and avoiding chromosomal lesions. The sequence is that of Probable inosine/xanthosine triphosphatase from Sulfurisphaera tokodaii (strain DSM 16993 / JCM 10545 / NBRC 100140 / 7) (Sulfolobus tokodaii).